Consider the following 341-residue polypeptide: GTP 3',8-cyclase (341 aa).

The region spanning lysine 11–glutamate 231 is the Radical SAM core domain. Residue arginine 20 participates in GTP binding. Residues cysteine 27 and cysteine 31 each coordinate [4Fe-4S] cluster. Residue tyrosine 33 coordinates S-adenosyl-L-methionine. Cysteine 34 contributes to the [4Fe-4S] cluster binding site. Position 75 (arginine 75) interacts with GTP. An S-adenosyl-L-methionine-binding site is contributed by glycine 79. Threonine 106 is a binding site for GTP. Serine 130 contacts S-adenosyl-L-methionine. Lysine 167 contributes to the GTP binding site. Position 201 (methionine 201) interacts with S-adenosyl-L-methionine. [4Fe-4S] cluster contacts are provided by cysteine 265 and cysteine 268. Arginine 270–arginine 272 is a GTP binding site. Cysteine 282 contacts [4Fe-4S] cluster.

It belongs to the radical SAM superfamily. MoaA family. Monomer and homodimer. The cofactor is [4Fe-4S] cluster.

It catalyses the reaction GTP + AH2 + S-adenosyl-L-methionine = (8S)-3',8-cyclo-7,8-dihydroguanosine 5'-triphosphate + 5'-deoxyadenosine + L-methionine + A + H(+). Its pathway is cofactor biosynthesis; molybdopterin biosynthesis. Its function is as follows. Catalyzes the cyclization of GTP to (8S)-3',8-cyclo-7,8-dihydroguanosine 5'-triphosphate. Required for both nitrate assimilation and respiration. The protein is GTP 3',8-cyclase of Bacillus subtilis (strain 168).